We begin with the raw amino-acid sequence, 315 residues long: Methionyl-tRNA formyltransferase (315 aa).

Residue 113–116 (SLLP) participates in (6S)-5,6,7,8-tetrahydrofolate binding.

Belongs to the Fmt family.

The enzyme catalyses L-methionyl-tRNA(fMet) + (6R)-10-formyltetrahydrofolate = N-formyl-L-methionyl-tRNA(fMet) + (6S)-5,6,7,8-tetrahydrofolate + H(+). Its function is as follows. Attaches a formyl group to the free amino group of methionyl-tRNA(fMet). The formyl group appears to play a dual role in the initiator identity of N-formylmethionyl-tRNA by promoting its recognition by IF2 and preventing the misappropriation of this tRNA by the elongation apparatus. This is Methionyl-tRNA formyltransferase from Enterobacter sp. (strain 638).